Here is a 557-residue protein sequence, read N- to C-terminus: Potassium-transporting ATPase potassium-binding subunit (557 aa).

Helical transmembrane passes span 5–25 (GFLL…PLGS), 63–83 (LCAI…MLLG), 132–152 (GLTV…FAFI), 170–190 (LLRI…LFLI), 253–273 (FVQM…FGEV), 283–303 (LLWA…WAEV), 329–349 (VLVS…AVIA), 356–376 (ALGG…FGGV), 379–399 (GLYG…LMIG), 416–436 (LTAL…ALAM), 484–504 (LLAF…MAIA), and 526–546 (LFVG…FIPA).

Belongs to the KdpA family. The system is composed of three essential subunits: KdpA, KdpB and KdpC.

It localises to the cell inner membrane. Functionally, part of the high-affinity ATP-driven potassium transport (or Kdp) system, which catalyzes the hydrolysis of ATP coupled with the electrogenic transport of potassium into the cytoplasm. This subunit binds the periplasmic potassium ions and delivers the ions to the membrane domain of KdpB through an intramembrane tunnel. The polypeptide is Potassium-transporting ATPase potassium-binding subunit (Shigella boydii serotype 18 (strain CDC 3083-94 / BS512)).